Here is an 814-residue protein sequence, read N- to C-terminus: Microbial collagenase (814 aa).

A signal peptide spans 1-21 (MELKILSVAIATTLTSTGVFA). The propeptide occupies 22–75 (LSEPVSQVTEQHAHSAHTHGVEFNRVEYQPTATLPIQPSKATRVQSLESLDESS). H477 provides a ligand contact to Zn(2+). Residue E478 is part of the active site. H481 contacts Zn(2+). Residues 609–697 (APNAVITANS…VVISALGGND (89 aa)) form the PKD domain.

The protein belongs to the peptidase M9A family. Requires Zn(2+) as cofactor. Proteolytic cleavage might yield three different active forms.

The protein localises to the secreted. The enzyme catalyses Digestion of native collagen in the triple helical region at Xaa-|-Gly bonds. With synthetic peptides, a preference is shown for Gly at P3 and P1', Pro and Ala at P2 and P2', and hydroxyproline, Ala or Arg at P3'.. This chain is Microbial collagenase, found in Vibrio alginolyticus.